Reading from the N-terminus, the 538-residue chain is AAA ATPase forming ring-shaped complexes (538 aa).

The stretch at 14–54 (ARELRLANHRLGAQNEKLTEALKASREKLAEINSRLADMAE) forms a coiled coil. 240–245 (GNGKTL) is a binding site for ATP.

Belongs to the AAA ATPase family. As to quaternary structure, homohexamer. Assembles into a hexameric ring structure.

The polypeptide is AAA ATPase forming ring-shaped complexes (Corynebacterium urealyticum (strain ATCC 43042 / DSM 7109)).